A 117-amino-acid polypeptide reads, in one-letter code: Small ribosomal subunit protein uS17 (117 aa).

The disordered stretch occupies residues 1 to 42 (MMAEAKKAAPKKAATAASKDADAKGPKHTPPNPKVRGRRKTR).

The protein belongs to the universal ribosomal protein uS17 family. In terms of assembly, part of the 30S ribosomal subunit.

Its function is as follows. One of the primary rRNA binding proteins, it binds specifically to the 5'-end of 16S ribosomal RNA. The polypeptide is Small ribosomal subunit protein uS17 (Mycolicibacterium paratuberculosis (strain ATCC BAA-968 / K-10) (Mycobacterium paratuberculosis)).